A 215-amino-acid chain; its full sequence is Ras-related protein Rab-5A (215 aa).

GTP-binding residues include Ser29, Ala30, Gly32, Lys33, Ser34, Ser35, His46, Glu47, Thr52, and Gly78. A Mg(2+)-binding site is contributed by Ser34. Short sequence motifs (switch) lie at residues 44–56 and 77–93; these read QFHEFQESTIGAA and AGQERYHSLAPMYYRGA. Residue Thr52 participates in Mg(2+) binding. Ser84 bears the Phosphoserine mark. 5 residues coordinate GTP: Asn133, Lys134, Asp136, Ala164, and Lys165. Residues 181 to 215 are disordered; the sequence is LPKNEPQNPGANSARGRGVDLTEPTQPTRSQCCSN. Residues 203–215 show a composition bias toward polar residues; that stretch reads EPTQPTRSQCCSN. Residues Cys212 and Cys213 are each lipidated (S-geranylgeranyl cysteine).

This sequence belongs to the small GTPase superfamily. Rab family. In terms of assembly, interacts with GDI1; this promotes dissociation from membranes; phosphorylation at Ser-84 disrupts this interaction. Interacts with GDI2; phosphorylation at Ser-84 disrupts the interaction. Binds EEA1. Interacts with ALS2CL, SUN2, ZFYVE20 and RUFY1. Interacts with RIN1 and GAPVD1, which regulate its pathway, probably by acting as a GEF. Interacts with SGSM1 and SGSM3. Interacts with PIK3CB. Interacts with RABEP1 and RINL. Interacts with OCRL and INPP5F. May be a component of a complex composed of RAB5A, DYN2 and PIK3C3. Does not interact with the BLOC-3 complex (heterodimer of HPS1 and HPS4). Interacts with CLN5. Interacts with APPL2. Interacts with F8A1/F8A2/F8A3. Found in a complex with F8A1/F8A2/F8A3, HTT and RAB5A; mediates the recruitment of HTT by RAB5A onto early endosomes. Interacts with ATP9A. Interacts with PPP1R21; mediates the recruitment of FERRY complex by RAB5A onto early endosomes. Mg(2+) is required as a cofactor. Phosphorylation of Ser-84 in the switch II region by LRRK2 prevents the association of RAB regulatory proteins, including RAB GDP dissociation inhibitors GDI1 and GDI2.

The protein localises to the cell membrane. It localises to the early endosome membrane. It is found in the melanosome. The protein resides in the cytoplasmic vesicle. Its subcellular location is the cell projection. The protein localises to the ruffle. It localises to the cytoplasm. It is found in the cytosol. The protein resides in the membrane. Its subcellular location is the phagosome membrane. The protein localises to the endosome membrane. The enzyme catalyses GTP + H2O = GDP + phosphate + H(+). Regulated by guanine nucleotide exchange factors (GEFs) including RINL, which promote the exchange of bound GDP for free GTP. Regulated by GTPase activating proteins (GAPs) which increase the GTP hydrolysis activity. Inhibited by GDP dissociation inhibitors (GDIs). In terms of biological role, the small GTPases Rab are key regulators of intracellular membrane trafficking, from the formation of transport vesicles to their fusion with membranes. Rabs cycle between an inactive GDP-bound form and an active GTP-bound form that is able to recruit to membranes different sets of downstream effectors directly responsible for vesicle formation, movement, tethering and fusion. RAB5A is required for the fusion of plasma membranes and early endosomes. Contributes to the regulation of filopodia extension. Required for the exosomal release of SDCBP, CD63, PDCD6IP and syndecan. Regulates maturation of apoptotic cell-containing phagosomes, probably downstream of DYN2 and PIK3C3. This Canis lupus familiaris (Dog) protein is Ras-related protein Rab-5A (RAB5A).